A 183-amino-acid chain; its full sequence is Interleukin-36 beta (183 aa).

Residues 1–30 constitute a propeptide that is removed on maturation; it reads MMAFPPQSCVHVLPPKSIQMWEPNHNTMHG.

It belongs to the IL-1 family. As to quaternary structure, interacts with cargo receptor TMED10; the interaction mediates the translocation from the cytoplasm into the ERGIC (endoplasmic reticulum-Golgi intermediate compartment) and thereby secretion. N-terminal truncation leads to a dramatic enhancement of its activity (&gt;1000-fold).

The protein resides in the cytoplasm. It localises to the secreted. Cytokine that binds to and signals through the IL1RL2/IL-36R receptor which in turn activates NF-kappa-B and MAPK signaling pathways in target cells linked to a pro-inflammatory response. Part of the IL-36 signaling system that is thought to be present in epithelial barriers and to take part in local inflammatory response; similar to the IL-1 system with which it shares the coreceptor IL1RAP. Stimulates production of interleukin-6 and interleukin-8 in synovial fibrobasts, articular chondrocytes and mature adipocytes. Induces expression of a number of antimicrobial peptides including beta-defensin 4 and beta-defensin 103 as well as a number of matrix metalloproteases. Seems to be involved in skin inflammatory response by acting on keratinocytes, dendritic cells and indirectly on T-cells to drive tissue infiltration, cell maturation and cell proliferation. Induces the production of pro-inflammatory cytokines in bone marrow-derived dendritic cells (BMDCs), including IL-12, Il-1 beta, IL-6, TNF-alpha and IL-23, and activates p38 MAPK phosphorylation in BMDCs. Involved in dendritic cell maturation by stimulating the surface expression of CD80, CD86 and MHC class II. Induces the production of IFN-gamma, IL-4 and IL-17 by T-helper 1 (Th1) cells, cultured CD4(+) T-cells and splenocytes. The sequence is that of Interleukin-36 beta from Mus musculus (Mouse).